The sequence spans 1061 residues: Chimeric ERCC6-PGBD3 protein (1061 aa).

Residues 1–39 (MPNEGIPHSSQTQEQDCLQSQPVSNNEEMAIKQESGGDG) form a disordered region. Positions 8–27 (HSSQTQEQDCLQSQPVSNNE) are enriched in polar residues. Ser158 bears the Phosphoserine mark. A Glycyl lysine isopeptide (Lys-Gly) (interchain with G-Cter in SUMO2) cross-link involves residue Lys255. 4 disordered regions span residues 287 to 323 (KQGC…VLSK), 344 to 466 (GKVG…QRLS), 494 to 521 (VIQP…INNL), and 537 to 573 (SDAE…SRRR). Positions 353-363 (RPWESDMRPEA) are enriched in basic and acidic residues. The segment covering 364–392 (EGDSEGEESEYFPTEEEEEEEDDEVEGAE) has biased composition (acidic residues). Phosphoserine occurs at positions 429 and 430. The span at 451-462 (RYRDDGDEDYYK) shows a compositional bias: basic and acidic residues. Residues 506–515 (SDEESGDEEG) are compositionally biased toward acidic residues. The residue at position 554 (Ser554) is a Phosphoserine.

As to expression, expressed in heart and oocytes, but not in granulosa cells (at protein level).

The protein localises to the nucleus. Involved in repair of DNA damage following UV irradiation, acting either in the absence of ERCC6 or synergistically with ERCC6. Involved in the regulation of gene expression. In the absence of ERCC6, induces the expression of genes characteristic of interferon-like antiviral responses. This response is almost completely suppressed in the presence of ERCC6. In the presence of ERCC6, regulates the expression of genes involved in metabolism regulation, including IGFBP5 and IGFBP7. In vitro binds to PGBD3-related transposable elements, called MER85s; these non-autonomous 140 bp elements are characterized by the presence of PGBD3 terminal inverted repeats and the absence of internal transposase ORF. The sequence is that of Chimeric ERCC6-PGBD3 protein from Homo sapiens (Human).